Consider the following 192-residue polypeptide: MNTIWIAVGALTLLGLVFGAILGYASRRFAVEDDPVVEKIDAILPQSQCGQCGYPGCRPYAEAVGLQGEKINRCAPGGEAVMLKIAELLNVEPQPCDGEEQQAAPVRMLAVIDENNCIGCTKCIQACPVDAIVGATRAMHTVMSDLCTGCNLCVDPCPTHCIELRPVNETPDSWKWDLNTIPVRIIPVEQHA.

The segment at Met-1–Ser-26 is hydrophobic. In terms of domain architecture, 4Fe-4S spans Glu-32–Val-91. The [4Fe-4S] cluster site is built by Cys-49, Cys-52, Cys-57, Cys-74, Cys-117, Cys-120, Cys-123, Cys-127, Cys-147, Cys-150, Cys-153, and Cys-157. 4Fe-4S ferredoxin-type domains follow at residues Met-108–Arg-137 and Ala-138–Val-167.

The protein belongs to the 4Fe4S bacterial-type ferredoxin family. RnfB subfamily. In terms of assembly, the complex is composed of six subunits: RsxA, RsxB, RsxC, RsxD, RsxE and RsxG. It depends on [4Fe-4S] cluster as a cofactor.

It is found in the cell inner membrane. In terms of biological role, part of a membrane-bound complex that couples electron transfer with translocation of ions across the membrane. Required to maintain the reduced state of SoxR. The sequence is that of Ion-translocating oxidoreductase complex subunit B from Salmonella dublin (strain CT_02021853).